The following is a 488-amino-acid chain: Glutamyl-tRNA(Gln) amidotransferase subunit A (488 aa).

Active-site charge relay system residues include lysine 77 and serine 152. Serine 176 acts as the Acyl-ester intermediate in catalysis.

This sequence belongs to the amidase family. GatA subfamily. In terms of assembly, heterotrimer of A, B and C subunits.

It carries out the reaction L-glutamyl-tRNA(Gln) + L-glutamine + ATP + H2O = L-glutaminyl-tRNA(Gln) + L-glutamate + ADP + phosphate + H(+). Its function is as follows. Allows the formation of correctly charged Gln-tRNA(Gln) through the transamidation of misacylated Glu-tRNA(Gln) in organisms which lack glutaminyl-tRNA synthetase. The reaction takes place in the presence of glutamine and ATP through an activated gamma-phospho-Glu-tRNA(Gln). The chain is Glutamyl-tRNA(Gln) amidotransferase subunit A from Latilactobacillus sakei subsp. sakei (strain 23K) (Lactobacillus sakei subsp. sakei).